Reading from the N-terminus, the 45-residue chain is uncharacterized protein (45 aa).

An N-terminal signal peptide occupies residues 1–19; the sequence is MTFQILFLFVFHFVYIFRA.

This is an uncharacterized protein from Saccharomyces cerevisiae (strain ATCC 204508 / S288c) (Baker's yeast).